A 299-amino-acid polypeptide reads, in one-letter code: Ribosomal RNA small subunit methyltransferase H (299 aa).

Residues 45–47, Asp-64, Phe-92, Asp-108, and Gln-115 contribute to the S-adenosyl-L-methionine site; that span reads GGH. Residues 275–299 form a disordered region; sequence PQSDEQAKNPRSRSAKLRLAQRKEQ. Over residues 284–299 the composition is skewed to basic residues; the sequence is PRSRSAKLRLAQRKEQ.

It belongs to the methyltransferase superfamily. RsmH family.

Its subcellular location is the cytoplasm. The enzyme catalyses cytidine(1402) in 16S rRNA + S-adenosyl-L-methionine = N(4)-methylcytidine(1402) in 16S rRNA + S-adenosyl-L-homocysteine + H(+). Functionally, specifically methylates the N4 position of cytidine in position 1402 (C1402) of 16S rRNA. The chain is Ribosomal RNA small subunit methyltransferase H from Gloeothece citriformis (strain PCC 7424) (Cyanothece sp. (strain PCC 7424)).